The sequence spans 228 residues: MENQPKLNSSKEVIAFLAERFPHCFSAEGEARPLKIGIFQDLVERVGGEMNLSKTQLRSALRLYTSSWRYLYGVKPGATRVDLDGNPCGELEEQHVEHARKQLEEAKARVQAQRAEQQAKKREAAAAAGEKEDAPRRERKPRPVARRKEGAERKPRADKPTTKAPRAPREEKHTPVSDISVLTVGQSLKVKAGNNAMDATVLEITKDGVRVQLNSGMSLIVRAEHLVF.

Residues 107-178 (KARVQAQRAE…REEKHTPVSD (72 aa)) are disordered. 2 stretches are compositionally biased toward basic and acidic residues: residues 117-136 (QQAK…DAPR) and 146-175 (RRKE…KHTP).

Belongs to the ProQ family.

It localises to the cytoplasm. Its function is as follows. RNA chaperone with significant RNA binding, RNA strand exchange and RNA duplexing activities. May regulate ProP activity through an RNA-based, post-transcriptional mechanism. The sequence is that of RNA chaperone ProQ from Salmonella agona (strain SL483).